A 199-amino-acid polypeptide reads, in one-letter code: MILKVCGITTQWDADAAIAAGATAIGFNFYPKSPRFVTPEIAAAITTKGARRVGVFVNERPARVEEIARIAALDVAQLHGDEGPGDYPGALTVWKAARVTPNFDFAQYDESPAEALLLDGPAAELYGGAGHTFDWTLAAASSHRIIVAGGLDASNVARAVELAHPWGVDSCSRIESAPGKKDIQKMTDFLHAAKAALGA.

The protein belongs to the TrpF family.

It carries out the reaction N-(5-phospho-beta-D-ribosyl)anthranilate = 1-(2-carboxyphenylamino)-1-deoxy-D-ribulose 5-phosphate. The protein operates within amino-acid biosynthesis; L-tryptophan biosynthesis; L-tryptophan from chorismate: step 3/5. The sequence is that of N-(5'-phosphoribosyl)anthranilate isomerase from Solibacter usitatus (strain Ellin6076).